Here is a 469-residue protein sequence, read N- to C-terminus: Acyltransferase clz18 (469 aa).

7 helical membrane-spanning segments follow: residues 21 to 41 (GLLS…LGYD), 70 to 90 (LFTI…CLFF), 134 to 154 (LSLL…TGFF), 253 to 273 (ILAA…PLFW), 346 to 366 (GLIV…LYSL), 391 to 411 (IYLI…SWVW), and 424 to 444 (VGFG…AAIF).

It belongs to the acyltransferase 3 family.

Its subcellular location is the membrane. It functions in the pathway secondary metabolite biosynthesis. Its function is as follows. Acyltransferase; part of the gene cluster that mediates the biosynthesis of squalestatin S1 (SQS1, also known as zaragozic acid A), a heavily oxidized fungal polyketide that offers potent cholesterol lowering activity by targeting squalene synthase (SS). SQS1 is composed of a 2,8-dioxobicyclic[3.2.1]octane-3,4,5-tricarboxyclic acid core that is connected to two lipophilic polyketide arms. These initial steps feature the priming of an unusual benzoic acid starter unit onto the highly reducing polyketide synthase clz14, followed by oxaloacetate extension and product release to generate a tricarboxylic acid containing product. The phenylalanine ammonia lyase (PAL) clz10 and the acyl-CoA ligase clz12 are involved in transforming phenylalanine into benzoyl-CoA. The citrate synthase-like protein clz17 is involved in connecting the C-alpha-carbons of the hexaketide chain and oxaloacetate to afford the tricarboxylic acid unit. The potential hydrolytic enzymes, clz11 and clz13, are in close proximity to pks2 and may participate in product release. On the other side, the tetraketide arm is synthesized by a the squalestatin tetraketide synthase clz2 and enzymatically esterified to the core in the last biosynthetic step, by the acetyltransferase clz6. The biosynthesis of the tetraketide must involve 3 rounds of chain extension. After the first and second rounds methyl-transfer occurs, and in all rounds of extension the ketoreductase and dehydratase are active. The enoyl reductase and C-MeT of clz2 are not active in the final round of extension. The acetyltransferase clz6 appears to have a broad substrate selectivity for its acyl CoA substrate, allowing the in vitro synthesis of novel squalestatins. The biosynthesis of SQS1 requires several oxidative steps likely performed by oxidoreductases clz3, clz15 and clz16. Finally, in support of the identification of the cluster as being responsible for SQS1 production, the cluster contains a gene encoding a putative squalene synthase (SS) clz20, suggesting a likely mechanism for self-resistance. The chain is Acyltransferase clz18 from Cochliobolus lunatus (Filamentous fungus).